The sequence spans 369 residues: Protein RecA (369 aa).

77 to 84 (GPESSGKT) contributes to the ATP binding site.

Belongs to the RecA family.

The protein resides in the cytoplasm. In terms of biological role, can catalyze the hydrolysis of ATP in the presence of single-stranded DNA, the ATP-dependent uptake of single-stranded DNA by duplex DNA, and the ATP-dependent hybridization of homologous single-stranded DNAs. It interacts with LexA causing its activation and leading to its autocatalytic cleavage. This Corynebacterium pseudotuberculosis (strain C231) protein is Protein RecA.